The chain runs to 362 residues: 3-isopropylmalate dehydrogenase (362 aa).

An NAD(+)-binding site is contributed by 77-88 (GPKWGTGAVRPE). Residues Arg-95, Arg-105, Arg-134, and Asp-223 each coordinate substrate. 3 residues coordinate Mg(2+): Asp-223, Asp-248, and Asp-252. Position 287–298 (287–298 (GSAPDLPPNKVN)) interacts with NAD(+).

This sequence belongs to the isocitrate and isopropylmalate dehydrogenases family. In terms of assembly, homodimer. Mg(2+) is required as a cofactor. Requires Mn(2+) as cofactor.

It is found in the cytoplasm. The catalysed reaction is (2R,3S)-3-isopropylmalate + NAD(+) = 4-methyl-2-oxopentanoate + CO2 + NADH. Its pathway is amino-acid biosynthesis; L-leucine biosynthesis; L-leucine from 3-methyl-2-oxobutanoate: step 3/4. Functionally, catalyzes the oxidation of 3-carboxy-2-hydroxy-4-methylpentanoate (3-isopropylmalate) to 3-carboxy-4-methyl-2-oxopentanoate. The product decarboxylates to 4-methyl-2 oxopentanoate. The chain is 3-isopropylmalate dehydrogenase (LEU2) from Blastobotrys adeninivorans (Yeast).